The sequence spans 210 residues: Phosphate propanoyltransferase (210 aa).

CoA is bound at residue 26 to 28 (ISN). Zn(2+) is bound by residues His-30 and His-32. CoA is bound by residues Lys-71 and Arg-78. Position 84 (Arg-84) interacts with phosphate. The Zn(2+) site is built by Glu-90, His-138, His-140, and His-186. Asn-193 lines the CoA pocket.

This sequence belongs to the PduL family. The cofactor is Zn(2+).

The protein resides in the bacterial microcompartment. It carries out the reaction propanoyl-CoA + phosphate = propanoyl phosphate + CoA. It functions in the pathway polyol metabolism; 1,2-propanediol degradation. Functionally, involved in 1,2-propanediol (1,2-PD) utilization within the bacterial microcompartment (BMC) dedicated to 1,2-PD degradation by catalyzing the conversion of propanoyl-CoA to propanoyl-phosphate. Required for optimal growth on 1,2-PD. CoA is regenerated within the BMC (for use by PduP) via this enzyme, although there must also be cofactor transport across the BMC. Directly targeted to the BMC. Expression of a cosmid containing the full 21-gene pdu operon in E.coli allows E.coli to grow on 1,2-propanediol (1,2-PD) with the appearance of bacterial microcompartments (BMC) in its cytoplasm. In terms of biological role, the 1,2-PD-specific bacterial microcompartment (BMC) concentrates low levels of 1,2-PD catabolic enzymes, concentrates volatile reaction intermediates thus enhancing pathway flux and keeps the level of toxic, mutagenic propionaldehyde low. This Citrobacter freundii protein is Phosphate propanoyltransferase.